A 256-amino-acid polypeptide reads, in one-letter code: Type III pantothenate kinase (256 aa).

An ATP-binding site is contributed by 6–13 (DIGNSSIV). Substrate contacts are provided by residues Tyr-101 and 108-111 (GADR). Asp-110 serves as the catalytic Proton acceptor. A K(+)-binding site is contributed by Asp-130. Thr-133 contributes to the ATP binding site. Thr-185 contributes to the substrate binding site.

The protein belongs to the type III pantothenate kinase family. In terms of assembly, homodimer. The cofactor is NH4(+). It depends on K(+) as a cofactor.

The protein resides in the cytoplasm. The enzyme catalyses (R)-pantothenate + ATP = (R)-4'-phosphopantothenate + ADP + H(+). It participates in cofactor biosynthesis; coenzyme A biosynthesis; CoA from (R)-pantothenate: step 1/5. Its function is as follows. Catalyzes the phosphorylation of pantothenate (Pan), the first step in CoA biosynthesis. The polypeptide is Type III pantothenate kinase (Shouchella clausii (strain KSM-K16) (Alkalihalobacillus clausii)).